Consider the following 480-residue polypeptide: Glycogen synthase (480 aa).

Lys-15 is a binding site for ADP-alpha-D-glucose.

Belongs to the glycosyltransferase 1 family. Bacterial/plant glycogen synthase subfamily.

The enzyme catalyses [(1-&gt;4)-alpha-D-glucosyl](n) + ADP-alpha-D-glucose = [(1-&gt;4)-alpha-D-glucosyl](n+1) + ADP + H(+). It functions in the pathway glycan biosynthesis; glycogen biosynthesis. Its function is as follows. Synthesizes alpha-1,4-glucan chains using ADP-glucose. The polypeptide is Glycogen synthase (Rhizobium rhizogenes (strain K84 / ATCC BAA-868) (Agrobacterium radiobacter)).